We begin with the raw amino-acid sequence, 508 residues long: Ribonuclease Y (508 aa).

A helical transmembrane segment spans residues 2 to 22 (IITALIAIAVGFLIGYLARKI). Residues 198 to 261 (TVSVVTLPND…EVARIALEKL (64 aa)) enclose the KH domain. The HD domain maps to 324–417 (VLKHSIEVAH…VQAADAISAA (94 aa)).

Belongs to the RNase Y family.

Its subcellular location is the cell membrane. Endoribonuclease that initiates mRNA decay. This chain is Ribonuclease Y, found in Thermoanaerobacter pseudethanolicus (strain ATCC 33223 / 39E) (Clostridium thermohydrosulfuricum).